A 424-amino-acid chain; its full sequence is Serine--tRNA ligase (424 aa).

L-serine is bound at residue 230–232 (TAE). 261 to 263 (RSE) contacts ATP. Position 284 (glutamate 284) interacts with L-serine. An ATP-binding site is contributed by 348-351 (EISS). Position 384 (serine 384) interacts with L-serine.

It belongs to the class-II aminoacyl-tRNA synthetase family. Type-1 seryl-tRNA synthetase subfamily. Homodimer. The tRNA molecule binds across the dimer.

It is found in the cytoplasm. The catalysed reaction is tRNA(Ser) + L-serine + ATP = L-seryl-tRNA(Ser) + AMP + diphosphate + H(+). It catalyses the reaction tRNA(Sec) + L-serine + ATP = L-seryl-tRNA(Sec) + AMP + diphosphate + H(+). It functions in the pathway aminoacyl-tRNA biosynthesis; selenocysteinyl-tRNA(Sec) biosynthesis; L-seryl-tRNA(Sec) from L-serine and tRNA(Sec): step 1/1. Catalyzes the attachment of serine to tRNA(Ser). Is also able to aminoacylate tRNA(Sec) with serine, to form the misacylated tRNA L-seryl-tRNA(Sec), which will be further converted into selenocysteinyl-tRNA(Sec). The chain is Serine--tRNA ligase from Streptococcus pneumoniae (strain 70585).